The chain runs to 233 residues: Large ribosomal subunit protein uL1 (233 aa).

Belongs to the universal ribosomal protein uL1 family. Part of the 50S ribosomal subunit.

In terms of biological role, binds directly to 23S rRNA. The L1 stalk is quite mobile in the ribosome, and is involved in E site tRNA release. Functionally, protein L1 is also a translational repressor protein, it controls the translation of the L11 operon by binding to its mRNA. In Deinococcus deserti (strain DSM 17065 / CIP 109153 / LMG 22923 / VCD115), this protein is Large ribosomal subunit protein uL1.